A 122-amino-acid chain; its full sequence is Ribonuclease pancreatic (122 aa).

Residues Lys-6 and Arg-9 each coordinate substrate. The active-site Proton acceptor is His-11. 4 cysteine pairs are disulfide-bonded: Cys-25–Cys-83, Cys-39–Cys-94, Cys-57–Cys-109, and Cys-64–Cys-71. Substrate is bound by residues 40 to 44 (KPVNT), Lys-65, and Arg-84. The Proton donor role is filled by His-117.

It belongs to the pancreatic ribonuclease family. Monomer. Interacts with and forms tight 1:1 complexes with RNH1. Dimerization of two such complexes may occur. Interaction with RNH1 inhibits this protein. Pancreas.

The protein resides in the secreted. The catalysed reaction is an [RNA] containing cytidine + H2O = an [RNA]-3'-cytidine-3'-phosphate + a 5'-hydroxy-ribonucleotide-3'-[RNA].. The enzyme catalyses an [RNA] containing uridine + H2O = an [RNA]-3'-uridine-3'-phosphate + a 5'-hydroxy-ribonucleotide-3'-[RNA].. Its function is as follows. Endonuclease that catalyzes the cleavage of RNA on the 3' side of pyrimidine nucleotides. Acts on single-stranded and double-stranded RNA. This Notamacropus rufogriseus (Red-necked wallaby) protein is Ribonuclease pancreatic.